Consider the following 131-residue polypeptide: Fumarate reductase subunit C (131 aa).

Transmembrane regions (helical) follow at residues glutamate 30 to leucine 50, tryptophan 57 to leucine 77, and isoleucine 109 to leucine 129.

Belongs to the FrdC family. Part of an enzyme complex containing four subunits: a flavoprotein (FrdA), an iron-sulfur protein (FrdB), and two hydrophobic anchor proteins (FrdC and FrdD).

Its subcellular location is the cell inner membrane. Two distinct, membrane-bound, FAD-containing enzymes are responsible for the catalysis of fumarate and succinate interconversion; fumarate reductase is used in anaerobic growth, and succinate dehydrogenase is used in aerobic growth. Anchors the catalytic components of the fumarate reductase complex to the cell inner membrane, binds quinones. This Salmonella heidelberg (strain SL476) protein is Fumarate reductase subunit C.